We begin with the raw amino-acid sequence, 61 residues long: Protein translocase subunit SecE (61 aa).

Topologically, residues 1-34 (MAELQERIRHFWKESRRAFLVTKKPNWATYKRAA) are cytoplasmic. Residues 35–55 (KITGLGIILIGLIGMLIRIVG) traverse the membrane as a helical segment. The Extracellular segment spans residues 56–61 (ILILGG).

Belongs to the SecE/SEC61-gamma family. Component of the Sec protein translocase complex. Heterotrimer consisting of alpha (SecY), beta (SecG) and gamma (SecE) subunits. The heterotrimers can form oligomers, although 1 heterotrimer is thought to be able to translocate proteins. Interacts with the ribosome. May interact with SecDF, and other proteins may be involved.

Its subcellular location is the cell membrane. Its function is as follows. Essential subunit of the protein translocation channel SecYEG. Clamps together the 2 halves of SecY. May contact the channel plug during translocation. The protein is Protein translocase subunit SecE of Pyrococcus furiosus (strain ATCC 43587 / DSM 3638 / JCM 8422 / Vc1).